Consider the following 356-residue polypeptide: Nicotinate-nucleotide--dimethylbenzimidazole phosphoribosyltransferase (356 aa).

Glu-317 acts as the Proton acceptor in catalysis.

The protein belongs to the CobT family. Homodimer.

The enzyme catalyses 5,6-dimethylbenzimidazole + nicotinate beta-D-ribonucleotide = alpha-ribazole 5'-phosphate + nicotinate + H(+). The protein operates within nucleoside biosynthesis; alpha-ribazole biosynthesis; alpha-ribazole from 5,6-dimethylbenzimidazole: step 1/2. Its function is as follows. Catalyzes the synthesis of alpha-ribazole-5'-phosphate from nicotinate mononucleotide (NAMN) and 5,6-dimethylbenzimidazole (DMB). The chain is Nicotinate-nucleotide--dimethylbenzimidazole phosphoribosyltransferase from Salmonella agona (strain SL483).